The primary structure comprises 30 residues: Cyclotide psyleio E (30 aa).

The cyclopeptide (Ser-Lys) cross-link spans S1–K30. Cystine bridges form between C7–C21, C11–C23, and C16–C28.

This is a cyclic peptide.

Its function is as follows. Probably participates in a plant defense mechanism. The sequence is that of Cyclotide psyleio E from Psychotria leiocarpa.